The sequence spans 123 residues: Small ribosomal subunit protein uS12 (123 aa).

Residues 1-28 (MPTIQQLIRKPRQPKVKRSKSQHLESCP) form a disordered region. Residues 9-21 (RKPRQPKVKRSKS) are compositionally biased toward basic residues. Position 89 is a 3-methylthioaspartic acid (Asp-89).

This sequence belongs to the universal ribosomal protein uS12 family. In terms of assembly, part of the 30S ribosomal subunit. Contacts proteins S8 and S17. May interact with IF1 in the 30S initiation complex.

Functionally, with S4 and S5 plays an important role in translational accuracy. In terms of biological role, interacts with and stabilizes bases of the 16S rRNA that are involved in tRNA selection in the A site and with the mRNA backbone. Located at the interface of the 30S and 50S subunits, it traverses the body of the 30S subunit contacting proteins on the other side and probably holding the rRNA structure together. The combined cluster of proteins S8, S12 and S17 appears to hold together the shoulder and platform of the 30S subunit. In Dinoroseobacter shibae (strain DSM 16493 / NCIMB 14021 / DFL 12), this protein is Small ribosomal subunit protein uS12.